Reading from the N-terminus, the 65-residue chain is uncharacterized protein (65 aa).

The protein localises to the plastid. Its subcellular location is the chloroplast. This is an uncharacterized protein from Mesostigma viride (Green alga).